Reading from the N-terminus, the 304-residue chain is Uricase (304 aa).

N-acetylalanine is present on Ala-2. 2 positions are modified to N6-acetyllysine; alternate: Lys-10 and Lys-23. N6-succinyllysine; alternate is present on residues Lys-10 and Lys-23. Catalysis depends on Lys-23, which acts as the Charge relay system. Lys-27 and Lys-36 each carry N6-acetyllysine. Phosphoserine occurs at positions 39 and 63. Thr-68 functions as the Charge relay system in the catalytic mechanism. Thr-68 and Asp-69 together coordinate urate. Lys-118, Lys-122, and Lys-164 each carry N6-acetyllysine. Phe-170 contacts urate. Residues Lys-175 and Lys-185 each carry the N6-acetyllysine modification. Arg-187 is a urate binding site. 2 positions are modified to N6-acetyllysine; alternate: Lys-221 and Lys-228. Residues Lys-221 and Lys-228 each carry the N6-succinyllysine; alternate modification. At Ser-232 the chain carries Phosphoserine. The urate site is built by Val-235, Gln-236, and Asn-262. His-264 (charge relay system) is an active-site residue. N6-acetyllysine is present on Lys-278. At Tyr-289 the chain carries Phosphotyrosine. Positions 302–304 match the Microbody targeting signal motif; that stretch reads SRL.

Belongs to the uricase family. Homotetramer.

Its subcellular location is the peroxisome. The catalysed reaction is urate + O2 + H2O = 5-hydroxyisourate + H2O2. It participates in purine metabolism; urate degradation; (S)-allantoin from urate: step 1/3. Its function is as follows. Catalyzes the oxidation of uric acid to 5-hydroxyisourate, which is further processed to form (S)-allantoin. The polypeptide is Uricase (UOX) (Sus scrofa (Pig)).